The chain runs to 65 residues: UPF0434 protein CPS_2127 (65 aa).

It belongs to the UPF0434 family.

The chain is UPF0434 protein CPS_2127 from Colwellia psychrerythraea (strain 34H / ATCC BAA-681) (Vibrio psychroerythus).